Here is a 105-residue protein sequence, read N- to C-terminus: Iron-sulfur cluster assembly protein CyaY (105 aa).

The protein belongs to the frataxin family.

Involved in iron-sulfur (Fe-S) cluster assembly. May act as a regulator of Fe-S biogenesis. The sequence is that of Iron-sulfur cluster assembly protein CyaY from Psychromonas ingrahamii (strain DSM 17664 / CCUG 51855 / 37).